Consider the following 281-residue polypeptide: UPF0162 protein PD_0709 (281 aa).

TPR repeat units follow at residues 193–226 (VRIL…VPNQ) and 227–260 (PEAL…YPST).

This sequence belongs to the UPF0162 family.

The polypeptide is UPF0162 protein PD_0709 (Xylella fastidiosa (strain Temecula1 / ATCC 700964)).